The following is a 382-amino-acid chain: Protein arginine N-methyltransferase 2 (382 aa).

ANK repeat units lie at residues 22–46 (AAQT…FQDD) and 48–80 (LGWS…AVDK). An RMT2 domain is found at 134–382 (KTSAGDNLVF…RLPIAKMSLI (249 aa)). Residues Phe-143, Met-177, 205–210 (FGLGIV), 228–230 (EAH), 255–256 (WQ), and Asp-284 each bind S-adenosyl-L-methionine.

The protein belongs to the class I-like SAM-binding methyltransferase superfamily. RMT2 methyltransferase family. Monomer.

Its subcellular location is the cytoplasm. It localises to the nucleus. Its function is as follows. S-adenosyl-L-methionine-dependent protein-arginine N-methyltransferase that methylates the delta-nitrogen atom of arginine residues to form N5-methylarginine (type IV) in target proteins. Monomethylates ribosomal protein L12. This Cryptococcus neoformans var. neoformans serotype D (strain JEC21 / ATCC MYA-565) (Filobasidiella neoformans) protein is Protein arginine N-methyltransferase 2.